The chain runs to 854 residues: Envelope glycoprotein B (854 aa).

An N-terminal signal peptide occupies residues 1–22; it reads MAHTGSTVCAFLIFAVLKNVFC. At 23–732 the chain is on the virion surface side; that stretch reads QTPTSSSEVE…SGIINFIKNP (710 aa). N-linked (GlcNAc...) asparagine; by host glycosylation occurs at Asn51. Disulfide bonds link Cys69/Cys527, Cys86/Cys483, Cys158/Cys223, Cys315/Cys362, and Cys552/Cys589. Positions 125–131 are involved in fusion and/or binding to host membrane; it reads IYNGIYA. N-linked (GlcNAc...) asparagine; by host glycosylation occurs at Asn180. An involved in fusion and/or binding to host membrane region spans residues 209 to 217; that stretch reads GWLLGGYRR. Residues Asn258 and Asn311 are each glycosylated (N-linked (GlcNAc...) asparagine; by host). N-linked (GlcNAc...) asparagine; by host glycans are attached at residues Asn364, Asn379, Asn385, Asn424, Asn564, and Asn630. The segment at 422-443 is disordered; it reads QQNTTTTTTTTRSRRQRRSVSS. The tract at residues 679–730 is hydrophobic membrane proximal region; it reads LTDLATNRNQFVDAFGSLMDDLGVVGKTVLNAVSSVATLFSSIVSGIINFIK. The chain crosses the membrane as a helical span at residues 733–753; it reads FGGMLLFGLIAAVVITVILLN. Residues 754–854 lie on the Intravirion side of the membrane; it reads RKAKRFAQNP…TDSFESTGVP (101 aa). A compositionally biased stretch (basic and acidic residues) spans 802 to 813; it reads HASKQPESKQDE. Positions 802–829 are disordered; that stretch reads HASKQPESKQDEEQGSTTSGPADWLNKA. The Internalization motif signature appears at 839-842; the sequence is YKPL.

It belongs to the herpesviridae glycoprotein B family. In terms of assembly, homotrimer; disulfide-linked. Binds to heparan sulfate proteoglycans. Interacts with gH/gL heterodimer. Post-translationally, a proteolytic cleavage by host furin generates two subunits that remain linked by disulfide bonds.

The protein localises to the virion membrane. It localises to the host cell membrane. It is found in the host endosome membrane. The protein resides in the host Golgi apparatus membrane. Its function is as follows. Envelope glycoprotein that forms spikes at the surface of virion envelope. Essential for the initial attachment to heparan sulfate moieties of the host cell surface proteoglycans. Involved in fusion of viral and cellular membranes leading to virus entry into the host cell. Following initial binding to its host receptors, membrane fusion is mediated by the fusion machinery composed at least of gB and the heterodimer gH/gL. May be involved in the fusion between the virion envelope and the outer nuclear membrane during virion egress. In Connochaetes taurinus (Blue wildebeest), this protein is Envelope glycoprotein B.